The sequence spans 414 residues: Gamma-glutamyl phosphate reductase (414 aa).

This sequence belongs to the gamma-glutamyl phosphate reductase family.

It localises to the cytoplasm. The enzyme catalyses L-glutamate 5-semialdehyde + phosphate + NADP(+) = L-glutamyl 5-phosphate + NADPH + H(+). The protein operates within amino-acid biosynthesis; L-proline biosynthesis; L-glutamate 5-semialdehyde from L-glutamate: step 2/2. Catalyzes the NADPH-dependent reduction of L-glutamate 5-phosphate into L-glutamate 5-semialdehyde and phosphate. The product spontaneously undergoes cyclization to form 1-pyrroline-5-carboxylate. The protein is Gamma-glutamyl phosphate reductase of Xanthomonas axonopodis pv. citri (strain 306).